A 246-amino-acid chain; its full sequence is E3 ubiquitin-protein ligase MARCHF2 (246 aa).

The segment at 56–116 (GTQSDGPICR…ELCHTEFAVE (61 aa)) adopts an RING-CH-type zinc-finger fold. Residues cysteine 64, cysteine 67, cysteine 80, cysteine 82, histidine 90, cysteine 93, cysteine 106, and cysteine 109 each coordinate Zn(2+). Helical transmembrane passes span 138–158 (LFCD…SGWL) and 175–195 (AVGL…WTLV).

The protein localises to the endoplasmic reticulum membrane. Its subcellular location is the lysosome membrane. It is found in the endosome membrane. It carries out the reaction S-ubiquitinyl-[E2 ubiquitin-conjugating enzyme]-L-cysteine + [acceptor protein]-L-lysine = [E2 ubiquitin-conjugating enzyme]-L-cysteine + N(6)-ubiquitinyl-[acceptor protein]-L-lysine.. It functions in the pathway protein modification; protein ubiquitination. Functionally, E3 ubiquitin-protein ligase which may be involved in endosomal trafficking. E3 ubiquitin ligases accept ubiquitin from an E2 ubiquitin-conjugating enzyme in the form of a thioester and then directly transfer the ubiquitin to targeted substrates. The sequence is that of E3 ubiquitin-protein ligase MARCHF2 (marchf2) from Xenopus laevis (African clawed frog).